The primary structure comprises 1147 residues: Nucleolar protein 8 (1147 aa).

Positions 8–89 constitute an RRM domain; that stretch reads KRLFVGGLGQ…GTLQIQLAKE (82 aa). Lysine 225 is covalently cross-linked (Glycyl lysine isopeptide (Lys-Gly) (interchain with G-Cter in SUMO2)). 2 positions are modified to phosphoserine: serine 300 and serine 306. Lysine 316 is covalently cross-linked (Glycyl lysine isopeptide (Lys-Gly) (interchain with G-Cter in SUMO2)). At tyrosine 362 the chain carries Phosphotyrosine. Serine 364 and serine 365 each carry phosphoserine. Threonine 367 carries the post-translational modification Phosphothreonine. The disordered stretch occupies residues 379–401; the sequence is KVKNSAESSQPERTVSKKSSFQK. The span at 383–400 shows a compositional bias: polar residues; it reads SAESSQPERTVSKKSSFQ. Serine 416 carries the phosphoserine modification. 7 disordered regions span residues 427–452, 472–511, 592–659, 686–741, 766–888, 932–963, and 986–1017; these read KFVN…EEYK, AGSH…DLYN, MENG…PLKA, KALE…EDNQ, ANLD…NEDE, KHDH…AEKL, and SNTD…TLAC. A compositionally biased stretch (acidic residues) spans 441 to 450; the sequence is DSEESEEDEE. Composition is skewed to polar residues over residues 592–610 and 629–650; these read MENG…TSCQ and TFEN…STNP. Basic and acidic residues-rich tracts occupy residues 700-714 and 732-741; these read SLEK…EDPQ and AKDKQAEDNQ. The residue at position 704 (serine 704) is a Phosphoserine. A Phosphothreonine modification is found at threonine 777. 2 positions are modified to phosphoserine: serine 783 and serine 787. The segment covering 799–809 has biased composition (basic and acidic residues); the sequence is CPEKELMKESV. Residues serine 819, serine 820, serine 825, serine 827, and serine 872 each carry the phosphoserine modification. Positions 857 to 883 are enriched in basic and acidic residues; sequence SDERFRMDSRFLESDSEDEKKELNEDK. Coiled-coil stretches lie at residues 868–898 and 937–963; these read LESD…KTLN and IYER…AEKL. Residues 994–1011 are compositionally biased toward basic and acidic residues; that stretch reads DVPRTEAGAREGTGKIRN. Lysine 1038 is covalently cross-linked (Glycyl lysine isopeptide (Lys-Gly) (interchain with G-Cter in SUMO2)). Positions 1055–1086 are disordered; that stretch reads PNDPRFQDSSSEEEDIAEEADHSKPSPGEAVP. 4 positions are modified to phosphoserine: serine 1063, serine 1064, serine 1065, and serine 1080.

As to quaternary structure, interacts with the GTP form of RRAGA, RRAGC and RRAGD. Interacts with NIP7. Interacts with DDX18; the interaction is RNA-dependent. Interacts with DDX47; the interaction is RNA-dependent. Phosphorylated.

The protein localises to the nucleus. The protein resides in the nucleolus. In terms of biological role, plays an essential role in the survival of diffuse-type gastric cancer cells. Acts as a nucleolar anchoring protein for DDX47. May be involved in regulation of gene expression at the post-transcriptional level or in ribosome biogenesis in cancer cells. The protein is Nucleolar protein 8 of Mus musculus (Mouse).